The sequence spans 171 residues: AN1-type zinc finger protein 2A (171 aa).

2 consecutive AN1-type zinc fingers follow at residues 4–52 (PDLG…KKDV) and 94–142 (KVFT…SSVS). Zn(2+) contacts are provided by Cys10, Cys15, Cys25, Cys28, Cys33, His36, His42, Cys44, Cys100, Cys105, Cys115, Cys118, Cys123, His126, His132, and Cys134. Residues 135-171 (QAGSSSVSRGRSSASRAAEQKPSGVSWLAQRLRRTVK) form a disordered region. A compositionally biased stretch (low complexity) spans 136 to 151 (AGSSSVSRGRSSASRA).

Its subcellular location is the cytoplasm. It localises to the nucleus. In Rattus norvegicus (Rat), this protein is AN1-type zinc finger protein 2A (Zfand2a).